The following is a 472-amino-acid chain: ATP synthase subunit beta (472 aa).

ATP is bound at residue 157-164 (GGAGVGKT).

It belongs to the ATPase alpha/beta chains family. As to quaternary structure, F-type ATPases have 2 components, CF(1) - the catalytic core - and CF(0) - the membrane proton channel. CF(1) has five subunits: alpha(3), beta(3), gamma(1), delta(1), epsilon(1). CF(0) has three main subunits: a(1), b(2) and c(9-12). The alpha and beta chains form an alternating ring which encloses part of the gamma chain. CF(1) is attached to CF(0) by a central stalk formed by the gamma and epsilon chains, while a peripheral stalk is formed by the delta and b chains.

The protein resides in the cell membrane. The catalysed reaction is ATP + H2O + 4 H(+)(in) = ADP + phosphate + 5 H(+)(out). Its function is as follows. Produces ATP from ADP in the presence of a proton gradient across the membrane. The catalytic sites are hosted primarily by the beta subunits. The chain is ATP synthase subunit beta from Desulforamulus reducens (strain ATCC BAA-1160 / DSM 100696 / MI-1) (Desulfotomaculum reducens).